A 788-amino-acid polypeptide reads, in one-letter code: Autophagy-related protein 9 (788 aa).

At 1-171 (MTDKSTFLSV…EAYMYYTGKG (171 aa)) the chain is on the cytoplasmic side. Over residues 32-42 (ILRRVEEEHAQ) the composition is skewed to basic and acidic residues. Residues 32 to 127 (ILRRVEEEHA…TGVANGGLPR (96 aa)) are disordered. Low complexity predominate over residues 44 to 58 (SDNSNSDNDSGNDSD). The segment covering 101-112 (SFAQGTKTQTPI) has biased composition (polar residues). Residues 172 to 192 (LVSIILSRVLNMSTIMFVVVF) traverse the membrane as a helical segment. Residues 193–222 (STYLGSCIDYSKIKGSRTLDEVHVKQCYAK) lie on the Lumenal side of the membrane. Residues 223 to 243 (LGSFHVFVLWTFFVLWFMKLF) form a helical membrane-spanning segment. The Cytoplasmic segment spans residues 244-390 (QYVKDIRRLV…QILSTGLRRR (147 aa)). An intramembrane region is located at residue Phe-391. At 392–479 (VFAAIMNVVF…PKEKTALVSK (88 aa)) the chain is on the cytoplasmic side. Residues 480 to 500 (FVSFIAGSFAAVLGIASLIDP) traverse the membrane as a helical segment. Residues 501–512 (ELFLMFEISANR) lie on the Lumenal side of the membrane. The helical transmembrane segment at 513-533 (TVLFYIGVFGSILAVSRSLIP) threads the bilayer. The Cytoplasmic segment spans residues 534-579 (EETLVFDPEISLRYVAEFTHYLPPEWEGKLHTEQVKNEFSLMYEMR). Residues 580-600 (LIILLKELASIFLAPFILYYS) lie within the membrane without spanning it. At 601–788 (LTQSCDDIVD…KKTDNMNLGA (188 aa)) the chain is on the cytoplasmic side. Residues 715-736 (LSPAAPTATTATSGTATGAAPR) form a disordered region. Over residues 716-734 (SPAAPTATTATSGTATGAA) the composition is skewed to low complexity.

This sequence belongs to the ATG9 family. As to quaternary structure, homotrimer; forms a homotrimer with a central pore that forms a path between the two membrane leaflets. Phosphorylated by ATG1. ATG1 phosphorylation is required for preautophagosome elongation.

It localises to the preautophagosomal structure membrane. It is found in the cytoplasmic vesicle membrane. The protein resides in the golgi apparatus membrane. Its subcellular location is the endoplasmic reticulum membrane. The enzyme catalyses a 1,2-diacyl-sn-glycero-3-phosphocholine(in) = a 1,2-diacyl-sn-glycero-3-phosphocholine(out). It catalyses the reaction a 1,2-diacyl-sn-glycero-3-phospho-L-serine(in) = a 1,2-diacyl-sn-glycero-3-phospho-L-serine(out). It carries out the reaction a 1,2-diacyl-sn-glycero-3-phosphoethanolamine(in) = a 1,2-diacyl-sn-glycero-3-phosphoethanolamine(out). The catalysed reaction is a 1,2-diacyl-sn-glycero-3-phospho-(1D-myo-inositol-3-phosphate)(in) = a 1,2-diacyl-sn-glycero-3-phospho-(1D-myo-inositol-3-phosphate)(out). Its function is as follows. Phospholipid scramblase involved in autophagy and cytoplasm to vacuole transport (Cvt) vesicle formation. Cycles between the preautophagosomal structure/phagophore assembly site (PAS) and the cytoplasmic vesicle pool and supplies membrane for the growing autophagosome. Lipid scramblase activity plays a key role in preautophagosomal structure/phagophore assembly by distributing the phospholipids that arrive through ATG2 from the cytoplasmic to the luminal leaflet of the bilayer, thereby driving autophagosomal membrane expansion. Required for mitophagy. Also involved in endoplasmic reticulum-specific autophagic process and is essential for the survival of cells subjected to severe ER stress. Different machineries are required for anterograde trafficking to the PAS during either the Cvt pathway or bulk autophagy and for retrograde trafficking. This Yarrowia lipolytica (strain CLIB 122 / E 150) (Yeast) protein is Autophagy-related protein 9.